Consider the following 1130-residue polypeptide: Transmembrane channel-like protein 3 (1130 aa).

Residues 1–148 are Cytoplasmic-facing; sequence MKTSKASQRY…ASYFIFLRWL (148 aa). A helical transmembrane segment spans residues 149-169; the sequence is FGINIVLTVMTGAFVVLPELI. At 170–192 the chain is on the extracellular side; it reads AGQPFGSTASKTIPREQITSAQD. A helical transmembrane segment spans residues 193–213; it reads LDTVWSLGGYLQYSVLFYGYY. Topologically, residues 214–225 are cytoplasmic; that stretch reads GRERRIGRAGYR. A helical membrane pass occupies residues 226-246; sequence LPLAYFLVGMAVFAYSFIVLL. Residues 247–319 lie on the Extracellular side of the membrane; it reads KRMAKNSRTS…KNMAVTVCLR (73 aa). N-linked (GlcNAc...) asparagine glycosylation occurs at N264. A helical membrane pass occupies residues 320 to 340; sequence IIANILVLLSLAGSIYLIYFV. Topologically, residues 341 to 361 are cytoplasmic; sequence VDRSQKLEQSKKELTLWEKNE. A helical transmembrane segment spans residues 362–382; it reads VSVVVSLVTMLAPSAFDLIAA. The Extracellular portion of the chain corresponds to 383–393; sequence LEMYHPRTTLR. Residues 394 to 414 traverse the membrane as a helical segment; that stretch reads FQLARVLVLYLGNLYSLIIAL. The Cytoplasmic segment spans residues 415 to 509; it reads LDKVNSMNIE…CWETYVGQEM (95 aa). Residues 510-530 traverse the membrane as a helical segment; it reads LKLSVIDMLFTVASILLIDFF. The Extracellular portion of the chain corresponds to 531–570; it reads RGLFVRYLSDYWCWDLESKFPEYGEFKIAENVLHLVYNQG. Residues 571–591 form a helical membrane-spanning segment; that stretch reads MIWMGAFFSPCLPAFNVLKLI. At 592–619 the chain is on the cytoplasmic side; that stretch reads GLMYLRSWAVLTCNVPHQQVFRASRSNN. Residues 620-640 traverse the membrane as a helical segment; it reads FYLAMLLFMLFLCMLPTIFAI. Topologically, residues 641-680 are extracellular; it reads VHYKPSLNCGPFSGQEKIYDIVSETIENDFPTWFHAVVGH. A helical transmembrane segment spans residues 681–701; it reads ISSPVVILPAVLLLFMLIYYL. At 702-1130 the chain is on the cytoplasmic side; it reads QSIARSLKLS…DLNDLICSNV (429 aa). 5 disordered regions span residues 742–774, 819–893, 999–1019, 1033–1059, and 1097–1116; these read DARQAGSATEAESSENSKPKTLQARIQTHEESS, RSLP…FQPI, SSCFYTGDRSENNTRDPKYQR, QLERPTFVHRKPRSRNGQYPQHALKAR, and QGRFPRSASQLGRRKAKSRQ. Residues 747 to 767 show a composition bias toward polar residues; that stretch reads GSATEAESSENSKPKTLQARI. The segment covering 840–850 has biased composition (basic and acidic residues); that stretch reads SRSRPEQDTNR. Polar residues predominate over residues 856–876; it reads CSSTSNLHKNRSCSSVTQTQP. Composition is skewed to basic and acidic residues over residues 878–890 and 1006–1017; these read KDVRSEPLSRKDF and DRSENNTRDPKY. Polar residues predominate over residues 1097–1106; sequence QGRFPRSASQ.

This sequence belongs to the TMC family. Detected in most neuronal organs and also in some non-neuronal tissues.

It is found in the membrane. Its function is as follows. Probable component of an ion channel. Molecular function hasn't been characterized yet. The protein is Transmembrane channel-like protein 3 of Mus musculus (Mouse).